Here is a 230-residue protein sequence, read N- to C-terminus: PsbP-like protein 1, chloroplastic (230 aa).

This sequence belongs to the PsbP family.

Its subcellular location is the plastid. It is found in the chloroplast thylakoid lumen. In terms of biological role, required for efficient repair of photodamaged PSII, but not tightly associated with the complex. This is PsbP-like protein 1, chloroplastic (PPL1) from Arabidopsis thaliana (Mouse-ear cress).